A 368-amino-acid chain; its full sequence is Peptide chain release factor 2 (368 aa).

Q250 carries the N5-methylglutamine modification.

It belongs to the prokaryotic/mitochondrial release factor family. Post-translationally, methylated by PrmC. Methylation increases the termination efficiency of RF2.

It localises to the cytoplasm. Functionally, peptide chain release factor 2 directs the termination of translation in response to the peptide chain termination codons UGA and UAA. This is Peptide chain release factor 2 from Chlamydia trachomatis serovar L2 (strain ATCC VR-902B / DSM 19102 / 434/Bu).